Here is a 321-residue protein sequence, read N- to C-terminus: Ferredoxin--NADP reductase (321 aa).

FAD is bound by residues D28, Q36, Y41, A81, F115, D274, and S315.

It belongs to the ferredoxin--NADP reductase type 2 family. Homodimer. FAD is required as a cofactor.

The enzyme catalyses 2 reduced [2Fe-2S]-[ferredoxin] + NADP(+) + H(+) = 2 oxidized [2Fe-2S]-[ferredoxin] + NADPH. The sequence is that of Ferredoxin--NADP reductase from Frankia alni (strain DSM 45986 / CECT 9034 / ACN14a).